The primary structure comprises 288 residues: Light-independent protochlorophyllide reductase iron-sulfur ATP-binding protein (288 aa).

Residues 10 to 15 (GIGKST) and Lys-39 each bind ATP. Ser-14 serves as a coordination point for Mg(2+). [4Fe-4S] cluster-binding residues include Cys-95 and Cys-129. Residues 180-181 (NR) and 204-206 (PLL) each bind ATP.

Belongs to the NifH/BchL/ChlL family. Homodimer. Protochlorophyllide reductase is composed of three subunits; ChlL, ChlN and ChlB. It depends on [4Fe-4S] cluster as a cofactor.

It localises to the plastid. It is found in the chloroplast. It carries out the reaction chlorophyllide a + oxidized 2[4Fe-4S]-[ferredoxin] + 2 ADP + 2 phosphate = protochlorophyllide a + reduced 2[4Fe-4S]-[ferredoxin] + 2 ATP + 2 H2O. The protein operates within porphyrin-containing compound metabolism; chlorophyll biosynthesis (light-independent). Its function is as follows. Component of the dark-operative protochlorophyllide reductase (DPOR) that uses Mg-ATP and reduced ferredoxin to reduce ring D of protochlorophyllide (Pchlide) to form chlorophyllide a (Chlide). This reaction is light-independent. The L component serves as a unique electron donor to the NB-component of the complex, and binds Mg-ATP. This is Light-independent protochlorophyllide reductase iron-sulfur ATP-binding protein from Stigeoclonium helveticum (Green alga).